Reading from the N-terminus, the 126-residue chain is Urease subunit beta (126 aa).

The protein belongs to the urease beta subunit family. Heterotrimer of UreA (gamma), UreB (beta) and UreC (alpha) subunits. Three heterotrimers associate to form the active enzyme.

The protein localises to the cytoplasm. The catalysed reaction is urea + 2 H2O + H(+) = hydrogencarbonate + 2 NH4(+). Its pathway is nitrogen metabolism; urea degradation; CO(2) and NH(3) from urea (urease route): step 1/1. This is Urease subunit beta from Haloquadratum walsbyi (strain DSM 16790 / HBSQ001).